The primary structure comprises 94 residues: Small ribosomal subunit protein uS19 (94 aa).

Belongs to the universal ribosomal protein uS19 family.

Its function is as follows. Protein S19 forms a complex with S13 that binds strongly to the 16S ribosomal RNA. The sequence is that of Small ribosomal subunit protein uS19 from Hamiltonella defensa subsp. Acyrthosiphon pisum (strain 5AT).